A 261-amino-acid chain; its full sequence is Hydroxyethylthiazole kinase (261 aa).

Residue methionine 39 participates in substrate binding. 2 residues coordinate ATP: arginine 115 and threonine 159. A substrate-binding site is contributed by glycine 186.

It belongs to the Thz kinase family. The cofactor is Mg(2+).

The catalysed reaction is 5-(2-hydroxyethyl)-4-methylthiazole + ATP = 4-methyl-5-(2-phosphooxyethyl)-thiazole + ADP + H(+). Its pathway is cofactor biosynthesis; thiamine diphosphate biosynthesis; 4-methyl-5-(2-phosphoethyl)-thiazole from 5-(2-hydroxyethyl)-4-methylthiazole: step 1/1. Functionally, catalyzes the phosphorylation of the hydroxyl group of 4-methyl-5-beta-hydroxyethylthiazole (THZ). The polypeptide is Hydroxyethylthiazole kinase (Macrococcus caseolyticus (strain JCSC5402) (Macrococcoides caseolyticum)).